The primary structure comprises 116 residues: Class I hydrophobin 1 (116 aa).

The N-terminal stretch at 1–19 (MLFKQAILVATTLTDLAVA) is a signal peptide. Intrachain disulfides connect cysteine 35–cysteine 95, cysteine 42–cysteine 89, cysteine 43–cysteine 76, and cysteine 96–cysteine 109. Asparagine 44 and asparagine 100 each carry an N-linked (GlcNAc...) asparagine glycan.

This sequence belongs to the fungal hydrophobin family. Self-assembles to form functional amyloid fibrils called rodlets. Self-assembly into fibrillar rodlets occurs spontaneously at hydrophobic:hydrophilic interfaces and the rodlets further associate laterally to form amphipathic monolayers.

The protein localises to the secreted. It is found in the cell wall. Its function is as follows. Aerial growth, conidiation, and dispersal of filamentous fungi in the environment rely upon a capability of their secreting small amphipathic proteins called hydrophobins (HPBs) with low sequence identity. Class I can self-assemble into an outermost layer of rodlet bundles on aerial cell surfaces, conferring cellular hydrophobicity that supports fungal growth, development and dispersal; whereas Class II form highly ordered films at water-air interfaces through intermolecular interactions but contribute nothing to the rodlet structure. This Pleurotus ostreatus (Oyster mushroom) protein is Class I hydrophobin 1.